Here is a 491-residue protein sequence, read N- to C-terminus: Chromosomal replication initiator protein DnaA (491 aa).

Positions 1–69 (MTTWDKCLKK…TIQECHGNDL (69 aa)) are domain I, interacts with DnaA modulators. The interval 69-154 (LIIEYSNKKF…KEDEEYSFGL (86 aa)) is domain II. The interval 155–371 (PLKEKYVFDS…GALNRVLTTS (217 aa)) is domain III, AAA+ region. Positions 199, 201, 202, and 203 each coordinate ATP. Residues 372–491 (KFNHKDPTIE…YELLLDKISR (120 aa)) are domain IV, binds dsDNA.

The protein belongs to the DnaA family. As to quaternary structure, oligomerizes as a right-handed, spiral filament on DNA at oriC.

Its subcellular location is the cytoplasm. Its function is as follows. Plays an essential role in the initiation and regulation of chromosomal replication. ATP-DnaA binds to the origin of replication (oriC) to initiate formation of the DNA replication initiation complex once per cell cycle. Binds the DnaA box (a 9 base pair repeat at the origin) and separates the double-stranded (ds)DNA. Forms a right-handed helical filament on oriC DNA; dsDNA binds to the exterior of the filament while single-stranded (ss)DNA is stabiized in the filament's interior. The ATP-DnaA-oriC complex binds and stabilizes one strand of the AT-rich DNA unwinding element (DUE), permitting loading of DNA polymerase. After initiation quickly degrades to an ADP-DnaA complex that is not apt for DNA replication. Binds acidic phospholipids. This Francisella tularensis subsp. holarctica (strain FTNF002-00 / FTA) protein is Chromosomal replication initiator protein DnaA.